The primary structure comprises 204 residues: Somatotropin (204 aa).

The first 17 residues, 1–17 (MERAVLLLSLLSLGVSS), serve as a signal peptide directing secretion. Position 18 is a pyrrolidone carboxylic acid (Gln18). His36 is a Zn(2+) binding site. Cys69 and Cys177 are oxidised to a cystine. Zn(2+) is bound at residue Glu186. The cysteines at positions 194 and 202 are disulfide-linked.

It belongs to the somatotropin/prolactin family.

The protein localises to the secreted. Its function is as follows. Growth hormone plays an important role in growth control and involved in the regulation of several anabolic processes. The chain is Somatotropin (gh) from Perca flavescens (American yellow perch).